The chain runs to 124 residues: Small ribosomal subunit protein uS12 (124 aa).

Aspartate 89 is modified (3-methylthioaspartic acid).

It belongs to the universal ribosomal protein uS12 family. In terms of assembly, part of the 30S ribosomal subunit. Contacts proteins S8 and S17. May interact with IF1 in the 30S initiation complex.

Its function is as follows. With S4 and S5 plays an important role in translational accuracy. Functionally, interacts with and stabilizes bases of the 16S rRNA that are involved in tRNA selection in the A site and with the mRNA backbone. Located at the interface of the 30S and 50S subunits, it traverses the body of the 30S subunit contacting proteins on the other side and probably holding the rRNA structure together. The combined cluster of proteins S8, S12 and S17 appears to hold together the shoulder and platform of the 30S subunit. The protein is Small ribosomal subunit protein uS12 of Hamiltonella defensa subsp. Acyrthosiphon pisum (strain 5AT).